The primary structure comprises 212 residues: Cytidylate kinase (212 aa).

7-15 provides a ligand contact to ATP; it reads GPAASGKGT.

Belongs to the cytidylate kinase family. Type 1 subfamily.

It localises to the cytoplasm. It catalyses the reaction CMP + ATP = CDP + ADP. The catalysed reaction is dCMP + ATP = dCDP + ADP. This Nitrobacter winogradskyi (strain ATCC 25391 / DSM 10237 / CIP 104748 / NCIMB 11846 / Nb-255) protein is Cytidylate kinase.